The chain runs to 430 residues: Protein AST2 (430 aa).

Lipid raft-associated protein involved in the targeting of PMA1 from Golgi to the plasma membrane. May induce clustering of PMA1, which facilitates partition of PMA1 into lipid rafts after leaving the ER its and transport to the cell surface. This is Protein AST2 from Saccharomyces cerevisiae (strain ATCC 204508 / S288c) (Baker's yeast).